The chain runs to 643 residues: Threonine--tRNA ligase 1 (643 aa).

The 62-residue stretch at 3–64 (DMVKITFPDG…NEDGTVEIIT (62 aa)) folds into the TGS domain. A catalytic region spans residues 245–542 (DHRKLGKELK…LIEEHKGALP (298 aa)). Residues C338, H389, and H519 each contribute to the Zn(2+) site.

This sequence belongs to the class-II aminoacyl-tRNA synthetase family. In terms of assembly, homodimer. Requires Zn(2+) as cofactor.

The protein resides in the cytoplasm. The catalysed reaction is tRNA(Thr) + L-threonine + ATP = L-threonyl-tRNA(Thr) + AMP + diphosphate + H(+). Functionally, catalyzes the attachment of threonine to tRNA(Thr) in a two-step reaction: L-threonine is first activated by ATP to form Thr-AMP and then transferred to the acceptor end of tRNA(Thr). Also edits incorrectly charged L-seryl-tRNA(Thr). This Bacillus subtilis (strain 168) protein is Threonine--tRNA ligase 1 (thrS).